A 184-amino-acid polypeptide reads, in one-letter code: ATP-dependent protease subunit HslV (184 aa).

Threonine 12 is an active-site residue. Na(+)-binding residues include alanine 166, cysteine 169, and threonine 172.

This sequence belongs to the peptidase T1B family. HslV subfamily. A double ring-shaped homohexamer of HslV is capped on each side by a ring-shaped HslU homohexamer. The assembly of the HslU/HslV complex is dependent on binding of ATP.

It is found in the cytoplasm. The enzyme catalyses ATP-dependent cleavage of peptide bonds with broad specificity.. With respect to regulation, allosterically activated by HslU binding. In terms of biological role, protease subunit of a proteasome-like degradation complex believed to be a general protein degrading machinery. In Brucella abortus (strain S19), this protein is ATP-dependent protease subunit HslV.